We begin with the raw amino-acid sequence, 470 residues long: ATP synthase subunit beta (470 aa).

Position 157-164 (157-164 (GGAGVGKT)) interacts with ATP.

This sequence belongs to the ATPase alpha/beta chains family. As to quaternary structure, F-type ATPases have 2 components, CF(1) - the catalytic core - and CF(0) - the membrane proton channel. CF(1) has five subunits: alpha(3), beta(3), gamma(1), delta(1), epsilon(1). CF(0) has three main subunits: a(1), b(2) and c(9-12). The alpha and beta chains form an alternating ring which encloses part of the gamma chain. CF(1) is attached to CF(0) by a central stalk formed by the gamma and epsilon chains, while a peripheral stalk is formed by the delta and b chains.

It localises to the cell inner membrane. It catalyses the reaction ATP + H2O + 4 H(+)(in) = ADP + phosphate + 5 H(+)(out). Produces ATP from ADP in the presence of a proton gradient across the membrane. The catalytic sites are hosted primarily by the beta subunits. The polypeptide is ATP synthase subunit beta (Geobacter metallireducens (strain ATCC 53774 / DSM 7210 / GS-15)).